Reading from the N-terminus, the 269-residue chain is Formamidopyrimidine-DNA glycosylase (269 aa).

The active-site Schiff-base intermediate with DNA is the Pro2. Glu3 functions as the Proton donor in the catalytic mechanism. Lys57 functions as the Proton donor; for beta-elimination activity in the catalytic mechanism. DNA is bound by residues His90, Arg109, and Lys150. The FPG-type zinc-finger motif lies at 235 to 269 (RVYGRNGEPCRTCGTPIETAKHGQRSTFFCRRCQK). The Proton donor; for delta-elimination activity role is filled by Arg259.

Belongs to the FPG family. In terms of assembly, monomer. The cofactor is Zn(2+).

It carries out the reaction Hydrolysis of DNA containing ring-opened 7-methylguanine residues, releasing 2,6-diamino-4-hydroxy-5-(N-methyl)formamidopyrimidine.. The enzyme catalyses 2'-deoxyribonucleotide-(2'-deoxyribose 5'-phosphate)-2'-deoxyribonucleotide-DNA = a 3'-end 2'-deoxyribonucleotide-(2,3-dehydro-2,3-deoxyribose 5'-phosphate)-DNA + a 5'-end 5'-phospho-2'-deoxyribonucleoside-DNA + H(+). In terms of biological role, involved in base excision repair of DNA damaged by oxidation or by mutagenic agents. Acts as a DNA glycosylase that recognizes and removes damaged bases. Has a preference for oxidized purines, such as 7,8-dihydro-8-oxoguanine (8-oxoG). Has AP (apurinic/apyrimidinic) lyase activity and introduces nicks in the DNA strand. Cleaves the DNA backbone by beta-delta elimination to generate a single-strand break at the site of the removed base with both 3'- and 5'-phosphates. The sequence is that of Formamidopyrimidine-DNA glycosylase from Pectobacterium carotovorum subsp. carotovorum (strain PC1).